A 315-amino-acid polypeptide reads, in one-letter code: G-box-binding factor 1 (315 aa).

2 disordered regions span residues 1–56 and 93–268; these read MGTS…GSPS and MPMP…RDEL. Residues 46–56 show a composition bias toward pro residues; that stretch reads PFFPSPVGSPS. Composition is skewed to polar residues over residues 133–164 and 178–187; these read GSGN…QEQG and ASSQSTTGEI. Residues 222 to 285 form the bZIP domain; the sequence is ELKRQKRKQS…DKLKSENNSI (64 aa). The interval 224 to 243 is basic motif; sequence KRQKRKQSNRESARRSRLRK. The segment covering 249–262 has biased composition (polar residues); it reads QLQQRVESLSNENQ. The segment at 250–285 is leucine-zipper; sequence LQQRVESLSNENQSLRDELQRLSSECDKLKSENNSI.

This sequence belongs to the bZIP family. As to quaternary structure, monomer and heterodimers with BZIP16 and BZIP68. Interacts with GIP1. In terms of processing, phosphorylated by CK2. As to expression, found in both light and dark grown leaves.

The protein localises to the nucleus. Binds to the G-box motif (5'-CCACGTGG-3') of the rbcS-1A gene promoter. G-box and G-box-like motifs are cis-acting elements defined in promoters of certain plant genes which are regulated by such diverse stimuli as light-induction or hormone control. Binds to the G-box motif 5'-CACGTG-3' of LHCB2.4 (At3g27690) promoter. May act as transcriptional activator in light-regulated expression of LHCB2.4. Probably binds DNA as monomer. DNA-binding activity is redox-dependent. The chain is G-box-binding factor 1 (GBF1) from Arabidopsis thaliana (Mouse-ear cress).